Consider the following 298-residue polypeptide: ATP synthase F(1) complex subunit gamma, mitochondrial (298 aa).

A mitochondrion-targeting transit peptide spans 1 to 25 (MFSRAGVAGLSAWTLQPQWIQVRNM). Position 39 is an N6-acetyllysine (lysine 39). Lysine 49 is subject to N6-succinyllysine. Lysine 55 carries the N6-acetyllysine modification. Lysine 115 carries the post-translational modification N6-acetyllysine; alternate. Position 115 is an N6-succinyllysine; alternate (lysine 115). A Phosphoserine modification is found at serine 146. Residue lysine 154 is modified to N6-acetyllysine; alternate. Lysine 154 carries the post-translational modification N6-succinyllysine; alternate. Lysine 197 is modified (N6-acetyllysine). Lysine 270 bears the N6-succinyllysine mark.

The protein belongs to the ATPase gamma chain family. In terms of assembly, component of the ATP synthase complex composed at least of ATP5F1A/subunit alpha, ATP5F1B/subunit beta, ATP5MC1/subunit c (homooctomer), MT-ATP6/subunit a, MT-ATP8/subunit 8, ATP5ME/subunit e, ATP5MF/subunit f, ATP5MG/subunit g, ATP5MK/subunit k, ATP5MJ/subunit j, ATP5F1C/subunit gamma, ATP5F1D/subunit delta, ATP5F1E/subunit epsilon, ATP5PF/subunit F6, ATP5PB/subunit b, ATP5PD/subunit d, ATP5PO/subunit OSCP. ATP synthase complex consists of a soluble F(1) head domain (subunits alpha(3) and beta(3)) - the catalytic core - and a membrane F(0) domain - the membrane proton channel (subunits c, a, 8, e, f, g, k and j). These two domains are linked by a central stalk (subunits gamma, delta, and epsilon) rotating inside the F1 region and a stationary peripheral stalk (subunits F6, b, d, and OSCP). Interacts with FLVCR2; this interaction occurs in the absence of heme and is disrupted upon heme binding.

It localises to the mitochondrion inner membrane. Its function is as follows. Subunit gamma, of the mitochondrial membrane ATP synthase complex (F(1)F(0) ATP synthase or Complex V) that produces ATP from ADP in the presence of a proton gradient across the membrane which is generated by electron transport complexes of the respiratory chain. ATP synthase complex consist of a soluble F(1) head domain - the catalytic core - and a membrane F(1) domain - the membrane proton channel. These two domains are linked by a central stalk rotating inside the F(1) region and a stationary peripheral stalk. During catalysis, ATP synthesis in the catalytic domain of F(1) is coupled via a rotary mechanism of the central stalk subunits to proton translocation. In vivo, can only synthesize ATP although its ATP hydrolase activity can be activated artificially in vitro. With the central stalk subunit delta, is essential for the biogenesis of F(1) catalytic part of the ATP synthase complex namely in the formation of F1 assembly intermediate. The chain is ATP synthase F(1) complex subunit gamma, mitochondrial from Macaca fascicularis (Crab-eating macaque).